The following is a 304-amino-acid chain: Vacuolar protein sorting-associated protein 26C (304 aa).

This sequence belongs to the VPS26 family. As to quaternary structure, component of the commander complex that is essential for endosomal recycling of transmembrane cargos; the commander complex is composed of the CCC subcomplex and the retriever subcomplex. Component of the heterotrimeric retriever complex consisting of vps26c, vps29 and vps35l; within the complex interacts with vps35l. Interacts with snx17 (via C-terminus); the interaction is direct and associates snx17 with the retriever complex. Interacts with snx31; the interaction is direct.

The protein resides in the endosome. Component of the commander complex that is essential for endosomal recycling of transmembrane cargos; the commander complex is composed of the CCC subcomplex and the retriever subcomplex. Component of the retriever complex, which is a heterotrimeric complex related to retromer cargo-selective complex (CSC) and essential for retromer-independent retrieval and recycling of numerous cargos such as integrin alpha-5/beta-1 (ITGA5:ITGB1). The recruitment of the retriever complex to the endosomal membrane involves CCC and WASH complexes. In the endosomes, drives the retriever and recycling of NxxY-motif-containing cargo proteins by coupling to snx17, a cargo essential for the homeostatic maintenance of numerous cell surface proteins associated with processes that include cell migration, cell adhesion, nutrient supply and cell signaling. This Dictyostelium discoideum (Social amoeba) protein is Vacuolar protein sorting-associated protein 26C (vps26c).